The following is a 151-amino-acid chain: UPF0756 membrane protein Aflv_0503 (151 aa).

Transmembrane regions (helical) follow at residues 4 to 24, 52 to 72, 85 to 105, and 115 to 135; these read FIFL…SLII, LGVT…KIGF, WIAM…VALL, and LVLG…GPLI.

It belongs to the UPF0756 family.

The protein resides in the cell membrane. In Anoxybacillus flavithermus (strain DSM 21510 / WK1), this protein is UPF0756 membrane protein Aflv_0503.